Here is a 591-residue protein sequence, read N- to C-terminus: Protein NRT1/ PTR FAMILY 4.3 (591 aa).

Residues 1 to 10 (MAEINKQSNK) show a composition bias toward polar residues. The segment at 1–38 (MAEINKQSNKWEQEEVSNENNWELAEEESVDWRGRPSN) is disordered. Helical transmembrane passes span 47–67 (AALF…AVGN), 85–105 (ANIV…GGYL), 109–129 (FLGS…GFIL), 157–177 (GFKA…SGCV), 204–224 (FNAA…LLVW), 233–253 (IGFG…VSGT), 347–367 (LISL…LAQL), 395–415 (AIPY…LVPF), 429–449 (LTRI…AAML), 463–483 (ILSI…EMFT), 502–522 (FLMA…SVLV), and 551–571 (LFYW…LFWS).

The protein belongs to the major facilitator superfamily. Proton-dependent oligopeptide transporter (POT/PTR) (TC 2.A.17) family. As to expression, expressed in flowers. Detected in roots and siliques.

The protein localises to the membrane. This is Protein NRT1/ PTR FAMILY 4.3 (NPF4.3) from Arabidopsis thaliana (Mouse-ear cress).